A 134-amino-acid chain; its full sequence is Small ribosomal subunit protein uS8c (134 aa).

Belongs to the universal ribosomal protein uS8 family. As to quaternary structure, part of the 30S ribosomal subunit.

The protein resides in the plastid. Its function is as follows. One of the primary rRNA binding proteins, it binds directly to 16S rRNA central domain where it helps coordinate assembly of the platform of the 30S subunit. The polypeptide is Small ribosomal subunit protein uS8c (rps8) (Cuscuta reflexa (Southern Asian dodder)).